We begin with the raw amino-acid sequence, 349 residues long: D-alanine--D-alanine ligase (349 aa).

The ATP-grasp domain maps to 132 to 335; that stretch reads KHVFEAVGVP…YSDLIEKLVD (204 aa). Residue 162–217 participates in ATP binding; the sequence is VEKLDFPVFVKPANMGSSVGISKVDDLADLQPALSEAYKYDNRVVIEQGVDAREIE. Positions 289, 302, and 304 each coordinate Mg(2+).

It belongs to the D-alanine--D-alanine ligase family. Mg(2+) is required as a cofactor. Requires Mn(2+) as cofactor.

It localises to the cytoplasm. The enzyme catalyses 2 D-alanine + ATP = D-alanyl-D-alanine + ADP + phosphate + H(+). It participates in cell wall biogenesis; peptidoglycan biosynthesis. In terms of biological role, cell wall formation. The protein is D-alanine--D-alanine ligase of Lactococcus lactis subsp. cremoris (strain MG1363).